We begin with the raw amino-acid sequence, 334 residues long: tRNA-dihydrouridine(20/20a) synthase (334 aa).

FMN is bound by residues 17–19 (PMM) and Gln-70. Cys-100 functions as the Proton donor in the catalytic mechanism. Residues Lys-139, His-171, 211–213 (NGG), and 233–234 (GR) contribute to the FMN site.

Belongs to the Dus family. DusA subfamily. It depends on FMN as a cofactor.

It carries out the reaction 5,6-dihydrouridine(20) in tRNA + NADP(+) = uridine(20) in tRNA + NADPH + H(+). The enzyme catalyses 5,6-dihydrouridine(20) in tRNA + NAD(+) = uridine(20) in tRNA + NADH + H(+). It catalyses the reaction 5,6-dihydrouridine(20a) in tRNA + NADP(+) = uridine(20a) in tRNA + NADPH + H(+). The catalysed reaction is 5,6-dihydrouridine(20a) in tRNA + NAD(+) = uridine(20a) in tRNA + NADH + H(+). Catalyzes the synthesis of 5,6-dihydrouridine (D), a modified base found in the D-loop of most tRNAs, via the reduction of the C5-C6 double bond in target uridines. Specifically modifies U20 and U20a in tRNAs. The polypeptide is tRNA-dihydrouridine(20/20a) synthase (dus2) (Synechocystis sp. (strain ATCC 27184 / PCC 6803 / Kazusa)).